Consider the following 359-residue polypeptide: Putative nucleotidyltransferase MAB21L1 (359 aa).

A ribonucleoside 5'-triphosphate is bound by residues 23–24 (RK) and 63–66 (YEGL). 2 residues coordinate Mg(2+): Glu73 and Glu75. A ribonucleoside 5'-triphosphate-binding positions include Lys248 and 252-255 (SILK).

The protein belongs to the mab-21 family. Monomer. Homodecamer; composed of 2 back to back homopentamers. The protein may exist as monomer in solution and oiligomerizes upon ligand binding.

It is found in the nucleus. Putative nucleotidyltransferase required for several aspects of embryonic development including normal development of the eye. It is unclear whether it displays nucleotidyltransferase activity in vivo. Binds single-stranded RNA (ssRNA). This is Putative nucleotidyltransferase MAB21L1 (MAB21L1) from Bos taurus (Bovine).